A 220-amino-acid polypeptide reads, in one-letter code: uncharacterized protein (220 aa).

Transmembrane regions (helical) follow at residues 9–29 (LWIT…GSTQ), 54–74 (YAVH…FLAV), 105–125 (VQGI…IHLW), and 177–197 (VLAV…VIEM).

It localises to the cell membrane. This is an uncharacterized protein from Sinorhizobium fredii (strain NBRC 101917 / NGR234).